Consider the following 265-residue polypeptide: Glutamate racemase (265 aa).

Substrate-binding positions include 12-13 (DS) and 44-45 (YG). Residue Cys75 is the Proton donor/acceptor of the active site. 76-77 (NT) serves as a coordination point for substrate. Cys186 serves as the catalytic Proton donor/acceptor. Substrate is bound at residue 187–188 (TH).

This sequence belongs to the aspartate/glutamate racemases family.

It catalyses the reaction L-glutamate = D-glutamate. It participates in cell wall biogenesis; peptidoglycan biosynthesis. In terms of biological role, provides the (R)-glutamate required for cell wall biosynthesis. In Pseudomonas paraeruginosa (strain DSM 24068 / PA7) (Pseudomonas aeruginosa (strain PA7)), this protein is Glutamate racemase.